Here is a 431-residue protein sequence, read N- to C-terminus: Histidinol dehydrogenase (431 aa).

Positions 127, 189, and 212 each coordinate NAD(+). Positions 237, 259, and 262 each coordinate substrate. 2 residues coordinate Zn(2+): Q259 and H262. Residues E326 and H327 each act as proton acceptor in the active site. Substrate contacts are provided by H327, D360, E414, and H419. A Zn(2+)-binding site is contributed by D360. H419 is a Zn(2+) binding site.

Belongs to the histidinol dehydrogenase family. Zn(2+) serves as cofactor.

It catalyses the reaction L-histidinol + 2 NAD(+) + H2O = L-histidine + 2 NADH + 3 H(+). It functions in the pathway amino-acid biosynthesis; L-histidine biosynthesis; L-histidine from 5-phospho-alpha-D-ribose 1-diphosphate: step 9/9. Its function is as follows. Catalyzes the sequential NAD-dependent oxidations of L-histidinol to L-histidinaldehyde and then to L-histidine. This is Histidinol dehydrogenase from Xylella fastidiosa (strain 9a5c).